A 1426-amino-acid polypeptide reads, in one-letter code: Ferlin 2 (1426 aa).

C2 domains follow at residues 1–111, 161–279, 512–638, 1031–1154, and 1189–1318; these read MGKT…QIRK, RKAV…PRWF, EKSK…ESPT, SEDR…QKSM, and KAGE…TLNS. Residues 1357–1377 form a disordered region; that stretch reads SKPVGLGREPPNRDPRLTTPQ. Positions 1366–1377 are enriched in basic and acidic residues; the sequence is PPNRDPRLTTPQ. Residues 1404 to 1424 traverse the membrane as a helical segment; sequence VAAVVFLSIWIFVVAFLYPSL.

Belongs to the ferlin family.

The protein localises to the membrane. It is found in the inner membrane complex. It localises to the cytoplasmic vesicle. Its subcellular location is the secretory vesicle. The protein resides in the rhoptry. Its function is as follows. Regulates rhoptry secretion. Required for completing the lytic cycle. Required for host cell invasion. Not required for microneme secretion and conoid extrusion. The sequence is that of Ferlin 2 from Toxoplasma gondii.